Consider the following 207-residue polypeptide: MTRTRVQKMIPKTIEYQKMISGQPYKAYDEELTQARCNAKKLMRRFNDTMGDLENVGPAELIKRRAELLAEVFVFDESSAPEIEPPMAFDYGFNVHFGKKFFANYNCTFLDVAIITIGNNVMLGPNVQLCTATHPLDFKARNSGIEFGLPINIQDNVWIGMGVIVLPGVTIGEGSVIGAGAVVTKDIPPNTLAVGSPAKPIRKIENE.

Belongs to the transferase hexapeptide repeat family.

The polypeptide is Putative acetyltransferase C18B11.09c (Schizosaccharomyces pombe (strain 972 / ATCC 24843) (Fission yeast)).